A 199-amino-acid chain; its full sequence is Single-stranded DNA-binding protein 2 (199 aa).

The SSB domain maps to 1 to 110; sequence MAGETVITVV…LDVDEVGASL (110 aa). Residues 114–199 are disordered; sequence TAKVTKTSGQ…GGGYSDEPPF (86 aa). The span at 123 to 156 shows a compositional bias: gly residues; sequence QGRGGQGGYGGGGGGQGGGGWGGGPGGGQQGGGA. Over residues 157–166 the composition is skewed to low complexity; the sequence is PADDPWATGG. Over residues 167–193 the composition is skewed to gly residues; that stretch reads APAGGQQGGGGQGGGGWGGGSGGGGGY.

Homotetramer. Post-translationally, phosphorylated on tyrosine residue(s) when expressed in E.coli.

The protein resides in the cytoplasm. It localises to the nucleoid. This chain is Single-stranded DNA-binding protein 2 (ssb2), found in Streptomyces coelicolor (strain ATCC BAA-471 / A3(2) / M145).